The sequence spans 36 residues: Turgencin-A (36 aa).

Cystine bridges form between C8-C33, C12-C29, and C17-C26. Methionine sulfoxide is present on M10. V36 is modified (valine amide).

It is found in the secreted. Functionally, has antimicrobial activity against Gram-positive bacteria (C.glutamicum ATCC 13032 (MIC=0.4 uM), B.subtilis ATCC 23857 (MIC=0.4 uM) and S.aureus ATCC 9144 (MIC=6.3 uM)) and Gram-negative bacteria (E.coli ATCC 25922 (MIC=0.8 uM) and P.aeruginosa ATCC 27853 (MIC=1.6 uM)). The polypeptide is Turgencin-A (Synoicum turgens (Colonial ascidian)).